Reading from the N-terminus, the 293-residue chain is 4-diphosphocytidyl-2-C-methyl-D-erythritol kinase (293 aa).

Residue Lys16 is part of the active site. ATP is bound at residue 99 to 109 (PMGAGLGGGSS). Asp141 is an active-site residue.

This sequence belongs to the GHMP kinase family. IspE subfamily.

The catalysed reaction is 4-CDP-2-C-methyl-D-erythritol + ATP = 4-CDP-2-C-methyl-D-erythritol 2-phosphate + ADP + H(+). Its pathway is isoprenoid biosynthesis; isopentenyl diphosphate biosynthesis via DXP pathway; isopentenyl diphosphate from 1-deoxy-D-xylulose 5-phosphate: step 3/6. Its function is as follows. Catalyzes the phosphorylation of the position 2 hydroxy group of 4-diphosphocytidyl-2C-methyl-D-erythritol. This chain is 4-diphosphocytidyl-2-C-methyl-D-erythritol kinase, found in Burkholderia multivorans (strain ATCC 17616 / 249).